The sequence spans 227 residues: 2,3-bisphosphoglycerate-dependent phosphoglycerate mutase (227 aa).

Substrate contacts are provided by residues Arg-7–Asn-14, Thr-20–Gly-21, Arg-59, Glu-86–Tyr-89, Lys-97, Arg-113–Arg-114, and Gly-182–Asn-183. The active-site Tele-phosphohistidine intermediate is His-8. Glu-86 functions as the Proton donor/acceptor in the catalytic mechanism.

It belongs to the phosphoglycerate mutase family. BPG-dependent PGAM subfamily. As to quaternary structure, homodimer.

It carries out the reaction (2R)-2-phosphoglycerate = (2R)-3-phosphoglycerate. The protein operates within carbohydrate degradation; glycolysis; pyruvate from D-glyceraldehyde 3-phosphate: step 3/5. Catalyzes the interconversion of 2-phosphoglycerate and 3-phosphoglycerate. The polypeptide is 2,3-bisphosphoglycerate-dependent phosphoglycerate mutase (Histophilus somni (strain 129Pt) (Haemophilus somnus)).